The primary structure comprises 326 residues: Putative UPF0725 protein At1g28500 (326 aa).

The segment covering 301 to 320 (KDTEQRSKTRQSEEKVESSQ) has biased composition (basic and acidic residues). The disordered stretch occupies residues 301-326 (KDTEQRSKTRQSEEKVESSQKRSRLC).

The protein belongs to the UPF0725 (EMB2204) family.

The polypeptide is Putative UPF0725 protein At1g28500 (Arabidopsis thaliana (Mouse-ear cress)).